Here is a 196-residue protein sequence, read N- to C-terminus: Putative NADH dehydrogenase/NAD(P)H nitroreductase xcc-b100_0585 (196 aa).

It belongs to the nitroreductase family. HadB/RutE subfamily. FMN serves as cofactor.

In Xanthomonas campestris pv. campestris (strain B100), this protein is Putative NADH dehydrogenase/NAD(P)H nitroreductase xcc-b100_0585.